The sequence spans 724 residues: MSGQEDWESEIDNPPACVPNLSNSEPAFKASNQNYFSSNNAFNRTTERGFGNRKASDDCNQNFEFSERGFGKQRAGSDANQNFESSERGFGNRRGKGRGGFGTFGKDSNGKQESGDFTNDDNRTIDDNRRRGGFQRRGGFNDETSGRGRRGVRGGTSFSGFGREDGNEQSGFTSNDGFNNETSGFGSGRRGSRGDSSFSGDRESDRGRGFGRGGFRGRNEDIGVESGKGQEGFERSEQGPRVTYIPPPPPAEESDIFKHYQTGINFDKYDDIVVEVSGSDVPPAILTFEEANLCDSLAKNVCKSGYVKLTPIQKHSIPIIVAGRDLMACAQTGSGKTAAFLLPILAHLMVKGVESSAFQTLKEPEAIIVAPTRELINQIYLDARKFSYGTCVRPVVIYGGTQMFHSLKQISEGCNILCATPGRLLDVIRKEKIGLTKLRYLVLDEADRMLDMGFREDIENLLKSSGMPSKEERQTLMFSATFPSSIQSLAREILKPDYLFVVVGQVGGACSDVEQMVIEVDEFGKKDKLMEILQEIGSERTMVFVKTKKKADFIATFLCQEKVPSTSIHGDREQKERETALRDFRTGQCPVIVATSVAARGLDIENVSYVINFDIPDDIDEYVHRIGRTGRCGNTGRAISFFDKRGDDEQRIARSLVKVLSDAHQEVPAWLEEVAFSAHGSSAYNPRSNKFASTDDRKRGDSRGDYSTSGFSPSAAQAEEEDWG.

Over residues 1–11 (MSGQEDWESEI) the composition is skewed to acidic residues. Disordered stretches follow at residues 1–25 (MSGQ…SNSE) and 37–241 (SSNN…QGPR). Positions 108–130 (SNGKQESGDFTNDDNRTIDDNRR) are enriched in basic and acidic residues. Residues 168 to 182 (EQSGFTSNDGFNNET) show a composition bias toward polar residues. The Q motif signature appears at 286-314 (LTFEEANLCDSLAKNVCKSGYVKLTPIQK). The 184-residue stretch at 317-500 (IPIIVAGRDL…REILKPDYLF (184 aa)) folds into the Helicase ATP-binding domain. 330-337 (AQTGSGKT) is an ATP binding site. Residues 444-447 (DEAD) carry the DEAD box motif. In terms of domain architecture, Helicase C-terminal spans 512 to 675 (DVEQMVIEVD…EVPAWLEEVA (164 aa)). Polar residues predominate over residues 683–692 (AYNPRSNKFA). Residues 683 to 724 (AYNPRSNKFASTDDRKRGDSRGDYSTSGFSPSAAQAEEEDWG) are disordered. Residues 693–704 (STDDRKRGDSRG) are compositionally biased toward basic and acidic residues. Polar residues predominate over residues 705 to 715 (DYSTSGFSPSA).

It belongs to the DEAD box helicase family. DDX4/VASA subfamily.

Its subcellular location is the cytoplasm. The catalysed reaction is ATP + H2O = ADP + phosphate + H(+). In terms of biological role, probable ATP-dependent RNA helicase required during spermatogenesis to repress transposable elements and preventing their mobilization, which is essential for the germline integrity. Acts via the piRNA metabolic process, which mediates the repression of transposable elements during meiosis by forming complexes composed of piRNAs and Piwi proteins and governs the methylation and subsequent repression of transposons. Involved in the secondary piRNAs metabolic process, the production of piRNAs in fetal male germ cells through a ping-pong amplification cycle. The protein is Probable ATP-dependent RNA helicase DDX4 of Pelophylax lessonae (Pool frog).